Here is a 68-residue protein sequence, read N- to C-terminus: Conotoxin Em11.5 (68 aa).

Positions 1–26 are cleaved as a signal peptide; that stretch reads MMFRLTSVGCFLLVIACLNLFQVVLT. 4 disulfides stabilise this stretch: Cys29–Cys43, Cys36–Cys48, Cys42–Cys52, and Cys47–Cys56. Phe60 bears the Phenylalanine amide mark. The propeptide occupies 64-68; sequence ATFQE.

It belongs to the conotoxin I2 superfamily. In terms of tissue distribution, expressed by the venom duct.

The protein localises to the secreted. This Conus emaciatus (False virgin cone) protein is Conotoxin Em11.5.